The following is a 422-amino-acid chain: Serine--tRNA ligase (422 aa).

231-233 (TAE) provides a ligand contact to L-serine. 261 to 263 (RSE) contacts ATP. An L-serine-binding site is contributed by Glu284. 348–351 (EISS) serves as a coordination point for ATP. Ser383 provides a ligand contact to L-serine.

Belongs to the class-II aminoacyl-tRNA synthetase family. Type-1 seryl-tRNA synthetase subfamily. In terms of assembly, homodimer. The tRNA molecule binds across the dimer.

The protein resides in the cytoplasm. It catalyses the reaction tRNA(Ser) + L-serine + ATP = L-seryl-tRNA(Ser) + AMP + diphosphate + H(+). It carries out the reaction tRNA(Sec) + L-serine + ATP = L-seryl-tRNA(Sec) + AMP + diphosphate + H(+). It functions in the pathway aminoacyl-tRNA biosynthesis; selenocysteinyl-tRNA(Sec) biosynthesis; L-seryl-tRNA(Sec) from L-serine and tRNA(Sec): step 1/1. In terms of biological role, catalyzes the attachment of serine to tRNA(Ser). Is also able to aminoacylate tRNA(Sec) with serine, to form the misacylated tRNA L-seryl-tRNA(Sec), which will be further converted into selenocysteinyl-tRNA(Sec). The protein is Serine--tRNA ligase of Mycoplasmopsis agalactiae (strain NCTC 10123 / CIP 59.7 / PG2) (Mycoplasma agalactiae).